The chain runs to 88 residues: U18-hexatoxin-Hi1a (88 aa).

The N-terminal stretch at 1 to 17 is a signal peptide; sequence MRIYSLLILSFLLLASA. Residues 18–47 constitute a propeptide that is removed on maturation; the sequence is VLINSAEMPRSEKSLLYSIMQGREDSEEGR. 4 cysteine pairs are disulfide-bonded: cysteine 48–cysteine 63, cysteine 55–cysteine 69, cysteine 62–cysteine 81, and cysteine 71–cysteine 79.

It belongs to the neurotoxin 07 (Beta/delta-agtx) family. 02 (aga-3) subfamily. As to expression, expressed by the venom gland.

Its subcellular location is the secreted. Weak insecticidal toxin with probable ion channel impairing activity. In vivo, induces paralysis when injected into sheep blowflies (L.cuprina). Shows weak toxicity, since it is only toxic at high doses, and flies recover within 24 hours. The polypeptide is U18-hexatoxin-Hi1a (Hadronyche infensa (Fraser island funnel-web spider)).